The primary structure comprises 163 residues: NADH-quinone oxidoreductase subunit B (163 aa).

Residues Cys-32, Cys-33, Cys-98, and Cys-127 each coordinate [4Fe-4S] cluster.

Belongs to the complex I 20 kDa subunit family. As to quaternary structure, NDH-1 is composed of 14 different subunits. Subunits NuoB, C, D, E, F, and G constitute the peripheral sector of the complex. The cofactor is [4Fe-4S] cluster.

Its subcellular location is the cell inner membrane. It catalyses the reaction a quinone + NADH + 5 H(+)(in) = a quinol + NAD(+) + 4 H(+)(out). Its function is as follows. NDH-1 shuttles electrons from NADH, via FMN and iron-sulfur (Fe-S) centers, to quinones in the respiratory chain. Couples the redox reaction to proton translocation (for every two electrons transferred, four hydrogen ions are translocated across the cytoplasmic membrane), and thus conserves the redox energy in a proton gradient. The sequence is that of NADH-quinone oxidoreductase subunit B from Pelobacter propionicus (strain DSM 2379 / NBRC 103807 / OttBd1).